The chain runs to 827 residues: MTKLNAQVKGSLNITTPGIQIWRIEAMQMVPVPSSTFGSFFDGDCYVVLAIHKTSSTLSYDIHYWIGQDSSQDEQGAAAIYTTQMDDYLKGRAVQHREVQGNESETFRSYFKQGLVIRKGGVASGMKHVETNSCDVQRLLHVKGKRNVLAGEVEMSWKSFNRGDVFLLDLGKLIIQWNGPESNRMERLRGMALAKEIRDQERGGRTYVGVVDGEKEGDSPQLMAIMNHVLGPRKELKAAISDSVVEPAAKAALKLYHVSDSEGKLVVREVATRPLTQDLLKHEDCYILDQGGLKIFVWKGKNANAQERSGAMSQALNFIKAKQYPPSTQVEVQNDGAESPIFQQLFQKWTVPNRTSGLGKTHTVGSVAKVEQVKFDALTMHVQPQVAAQQKMVDDGSGEVQVWRIEDLELVPVESKWLGHFYGGDCYLLLYTYLIGEKQHYLLYIWQGSQASQDEIAASAYQAVLLDQKYNDEPVQIRVTMGKEPPHLMSIFKGRMVVYQGGTSRKNNLEPVPSTRLFQVRGTNADNTKAFEVTARATSLNSNDVFILKTPSCCYLWCGKGCSGDEREMAKMVADTISRTEKQVVVEGQEPANFWMALGGKAPYANTKRLQEENQVITPRLFECSNQTGRFLATEIFDFNQDDLEEEDVFLLDVWDQVFFWIGKHANEEEKKAAATTVQEYLKTHPGNRDLETPIIVVKQGHEPPTFTGWFLAWDPFKWSNTKSYDDLKAELGNSGDWSQIADEVMSPKVDVFTANTSLSSGPLPTFPLEQLVNKSVEDLPEGVDPSRKEEHLSTEDFTRALGMTPAAFSALPRWKQQNIKKEKGLF.

The interval 1-126 is necessary for homodimerization; the sequence is MTKLNAQVKG…IRKGGVASGM (126 aa). The segment at 1-734 is core; the sequence is MTKLNAQVKG…YDDLKAELGN (734 aa). A Gelsolin-like 1 repeat occupies 27–76; it reads MQMVPVPSSTFGSFFDGDCYVVLAIHKTSSTLSYDIHYWIGQDSSQDEQG. 2 LPA/PIP2-binding site regions span residues 112–119 and 138–146; these read KQGLVIRK and RLLHVKGKR. Gelsolin-like repeat units follow at residues 148–188 and 265–309; these read VLAG…MERL and LVVR…QERS. Ser-366 is subject to Phosphoserine. Gelsolin-like repeat units lie at residues 407 to 457, 528 to 568, and 631 to 672; these read DLEL…DEIA, TKAF…DERE, and FLAT…EEKK. 2 positions are modified to phosphoserine: Ser-735 and Ser-776. Residues 735-827 form a headpiece region; it reads SGDWSQIADE…QNIKKEKGLF (93 aa). The HP domain occupies 761–827; the sequence is SGPLPTFPLE…QNIKKEKGLF (67 aa). The LPA/PIP2-binding site 3 stretch occupies residues 816–824; sequence KQQNIKKEK.

It belongs to the villin/gelsolin family. Monomer. Homodimer; homodimerization is necessary for actin-bundling. Associates with F-actin; phosphorylation at tyrosine residues decreases the association with F-actin. Interacts (phosphorylated at C-terminus tyrosine phosphorylation sites) with PLCG1 (via the SH2 domains). Interacts (phosphorylated form) with PLCG1; the interaction is enhanced by hepatocyte growth factor (HGF). Phosphorylated on tyrosine residues by SRC. The unphosphorylated form increases the initial rate of actin-nucleating activity, whereas the tyrosine phosphorylated form inhibits actin-nucleating activity, enhances actin-bundling activity and enhances actin-severing activity by reducing high Ca(2+) requirements. The tyrosine phosphorylated form does not regulate actin-capping activity. Tyrosine phosphorylation is essential for cell migration: tyrosine phosphorylation sites in the N-terminus half regulate actin reorganization and cell morphology, whereas tyrosine phosphorylation sites in the C-terminus half regulate cell migration via interaction with PLCG1. Tyrosine phosphorylation is induced by epidermal growth factor (EGF) and stimulates cell migration. As to expression, expressed in small intestin, colon, kidney and enterocytes (at protein level).

It is found in the cytoplasm. It localises to the cytoskeleton. Its subcellular location is the cell projection. The protein localises to the microvillus. The protein resides in the lamellipodium. It is found in the ruffle. It localises to the filopodium tip. Its subcellular location is the filopodium. In terms of biological role, epithelial cell-specific Ca(2+)-regulated actin-modifying protein that modulates the reorganization of microvillar actin filaments. Plays a role in the actin nucleation, actin filament bundle assembly, actin filament capping and severing. Binds phosphatidylinositol 4,5-bisphosphate (PIP2) and lysophosphatidic acid (LPA); binds LPA with higher affinity than PIP2. Binding to LPA increases its phosphorylation by SRC and inhibits all actin-modifying activities. Binding to PIP2 inhibits actin-capping and -severing activities but enhances actin-bundling activity. Regulates the intestinal epithelial cell morphology, cell invasion, cell migration and apoptosis. Protects against apoptosis induced by dextran sodium sulfate (DSS) in the gastrointestinal epithelium. Appears to regulate cell death by maintaining mitochondrial integrity. Enhances hepatocyte growth factor (HGF)-induced epithelial cell motility, chemotaxis and wound repair. Upon S.flexneri cell infection, its actin-severing activity enhances actin-based motility of the bacteria and plays a role during the dissemination. The chain is Villin-1 (Vil1) from Mus musculus (Mouse).